Consider the following 390-residue polypeptide: Protein phosphatase 1B (390 aa).

The segment covering 1–14 has biased composition (basic and acidic residues); it reads MGAFLDKPKTEKHN. The interval 1-20 is disordered; it reads MGAFLDKPKTEKHNAHGAGN. The N-myristoyl glycine moiety is linked to residue Gly2. Residue Lys12 forms a Glycyl lysine isopeptide (Lys-Gly) (interchain with G-Cter in ISG15) linkage. One can recognise a PPM-type phosphatase domain in the interval 23–295; sequence RYGLSSMQGW…DNMSVVLVCF (273 aa). Residues Asp60, Gly61, Asp243, and Asp286 each coordinate Mn(2+). Residues 371 to 390 are disordered; the sequence is NPHKDNDGGAGDLEDSLVAL. A Phosphoserine modification is found at Ser386.

It belongs to the PP2C family. In terms of assembly, monomer. Interacts with PAK6. Interacts with the phosphorylated form of IKBKB/IKKB. It depends on Mg(2+) as a cofactor. The cofactor is Mn(2+). In terms of processing, isgylation negatively regulates its activity. N-myristoylation is essential for the recognition of its substrates for dephosphorylation. As to expression, isoform 1: Expressed ubiquitously. Isoform 2: Expressed exclusively in testis and intestine. Isoform 3: Expressed exclusively in brain and intestine. Isoform 4: Expressed exclusively in testis and intestine.

The protein localises to the cytoplasm. It localises to the cytosol. It is found in the membrane. It carries out the reaction O-phospho-L-seryl-[protein] + H2O = L-seryl-[protein] + phosphate. It catalyses the reaction O-phospho-L-threonyl-[protein] + H2O = L-threonyl-[protein] + phosphate. Functionally, enzyme with a broad specificity. Dephosphorylates PRKAA1 and PRKAA2. Inhibits TBK1-mediated antiviral signaling by dephosphorylating it at 'Ser-172'. Plays an important role in the termination of TNF-alpha-mediated NF-kappa-B activation through dephosphorylating and inactivating IKBKB/IKKB. The sequence is that of Protein phosphatase 1B (Ppm1b) from Mus musculus (Mouse).